A 312-amino-acid chain; its full sequence is Olfactory receptor 51A7 (312 aa).

At 1–25 the chain is on the extracellular side; it reads MSVLNNSEVKLFLLIGIPGLEHAHI. An N-linked (GlcNAc...) asparagine glycan is attached at asparagine 5. A helical membrane pass occupies residues 26–46; it reads WFSIPICLMYLLAIMGNCTIL. The Cytoplasmic portion of the chain corresponds to 47–54; it reads FIIKTEPS. The helical transmembrane segment at 55-75 threads the bilayer; sequence LHEPMYYFLAMLAVSDMGLSL. Over 76-99 the chain is Extracellular; sequence SSLPTMLRVFLFNAMGISPNACFA. Cysteine 97 and cysteine 189 form a disulfide bridge. The chain crosses the membrane as a helical span at residues 100–120; that stretch reads QEFFIHGFTVMESSVLLIMSL. Over 121–139 the chain is Cytoplasmic; sequence DRFLAIHNPLRYSSILTSN. Residues 140–160 form a helical membrane-spanning segment; sequence RVAKMGLILAIRSILLVIPFP. Residues 161-196 are Extracellular-facing; sequence FTLRRLKYCQKNLLSHSYCLHQDTMKLACSDNKTNV. N-linked (GlcNAc...) asparagine glycosylation is present at asparagine 192. Residues 197–216 traverse the membrane as a helical segment; sequence IYGFFIALCTMLDLALIVLS. The Cytoplasmic segment spans residues 217–236; the sequence is YVLILKTILSIASLAERLKA. The chain crosses the membrane as a helical span at residues 237–257; sequence LNTCVSHICAVLTFYVPIITL. Residues 258 to 272 are Extracellular-facing; that stretch reads AAMHHFAKHKSPLVV. Residues 273–293 form a helical membrane-spanning segment; the sequence is ILIADMFLLVPPLMNPIVYCV. Residues 294–312 lie on the Cytoplasmic side of the membrane; it reads KTRQIWEKILGKLLNVCGR.

This sequence belongs to the G-protein coupled receptor 1 family.

It is found in the cell membrane. Functionally, odorant receptor. The protein is Olfactory receptor 51A7 (OR51A7) of Homo sapiens (Human).